Reading from the N-terminus, the 527-residue chain is Catalase (527 aa).

N-acetylalanine is present on Ala-2. Residue Ser-9 is modified to Phosphoserine. The residue at position 13 (Lys-13) is an N6-succinyllysine. Active-site residues include His-75 and Asn-148. Positions 194, 201, 203, and 213 each coordinate NADP(+). Position 221 is an N6-succinyllysine (Lys-221). Lys-233 carries the post-translational modification N6-acetyllysine. Residues Lys-237, Trp-303, His-305, and Lys-306 each coordinate NADP(+). Lys-306 carries the N6-acetyllysine; alternate modification. The residue at position 306 (Lys-306) is an N6-succinyllysine; alternate. Tyr-358 lines the heme pocket. 2 positions are modified to phosphoserine: Ser-417 and Ser-422. Lys-480 bears the N6-acetyllysine; alternate mark. An N6-succinyllysine; alternate modification is found at Lys-480. Residue Lys-499 is modified to N6-acetyllysine. Position 511 is a phosphothreonine (Thr-511). A phosphoserine mark is found at Ser-515 and Ser-517. Positions 524 to 527 (KANL) match the Microbody targeting signal; atypical motif.

Belongs to the catalase family. As to quaternary structure, homotetramer. Interacts (via microbody targeting signal) with PEX5, monomeric form interacts with PEX5, leading to its translocation into peroxisomes. Heme serves as cofactor. It depends on NADP(+) as a cofactor.

Its subcellular location is the peroxisome matrix. The catalysed reaction is 2 H2O2 = O2 + 2 H2O. Functionally, catalyzes the degradation of hydrogen peroxide (H(2)O(2)) generated by peroxisomal oxidases to water and oxygen, thereby protecting cells from the toxic effects of hydrogen peroxide. Promotes growth of cells including T-cells, B-cells, myeloid leukemia cells, melanoma cells, mastocytoma cells and normal and transformed fibroblast cells. The chain is Catalase (CAT) from Pongo abelii (Sumatran orangutan).